The following is a 482-amino-acid chain: MVATTETNVGKIVQIIGPVIDAEFPSGKLPRIYNALTVKGTNSAGQNLSVTCEVQQLLGDNQVRAVAMSTTDGLVRGMDIVDTGAAISVPVGKCTLGRIFNVLGEPVDEKGPVNVTETSPIHRPAPKLVDLEVTPTVFETGIKVIDLLTPYRQGGKIGLFGGAGVGKTVIMMELINNIAIQHGGVSVFGGVGERTREGNDLYNEMIESKVINADNPEDSKIALVYGQMNEPPGARMRVGLSALTMAEYFRDVSKQDVLLFIDNIFRFVQAGSEVSALLGRMPSAVGYQPTLGTDVGDLQERITSTKEGSITSIQAVYVPADDLTDPAPATTFAHLDGTTVLSRGLASKGIYPAVDPLGSTSTMLQADIVGDEHYGTARAVQSTLQRYKELQDIIAILGLDELSEEDRLTVDRARKIERFLSQPFFVAEVFTGSPGKYVTLADTIKGFQMILKGELDSLPEQAFYMVGSIDEAIAKGEKLKKG.

ATP is bound at residue 161-168; that stretch reads GGAGVGKT.

This sequence belongs to the ATPase alpha/beta chains family. As to quaternary structure, F-type ATPases have 2 components, CF(1) - the catalytic core - and CF(0) - the membrane proton channel. CF(1) has five subunits: alpha(3), beta(3), gamma(1), delta(1), epsilon(1). CF(0) has four main subunits: a(1), b(1), b'(1) and c(9-12).

The protein resides in the cellular thylakoid membrane. The enzyme catalyses ATP + H2O + 4 H(+)(in) = ADP + phosphate + 5 H(+)(out). Its function is as follows. Produces ATP from ADP in the presence of a proton gradient across the membrane. The catalytic sites are hosted primarily by the beta subunits. This Microcystis aeruginosa (strain NIES-843 / IAM M-2473) protein is ATP synthase subunit beta.